The primary structure comprises 208 residues: FMN-dependent NADH:quinone oxidoreductase (208 aa).

Residues S10, 16 to 18 (SVS), 94 to 97 (MYNF), and 138 to 141 (SRGG) each bind FMN.

Belongs to the azoreductase type 1 family. In terms of assembly, homodimer. The cofactor is FMN.

It carries out the reaction 2 a quinone + NADH + H(+) = 2 a 1,4-benzosemiquinone + NAD(+). It catalyses the reaction N,N-dimethyl-1,4-phenylenediamine + anthranilate + 2 NAD(+) = 2-(4-dimethylaminophenyl)diazenylbenzoate + 2 NADH + 2 H(+). Functionally, quinone reductase that provides resistance to thiol-specific stress caused by electrophilic quinones. Also exhibits azoreductase activity. Catalyzes the reductive cleavage of the azo bond in aromatic azo compounds to the corresponding amines. The protein is FMN-dependent NADH:quinone oxidoreductase of Hyphomonas neptunium (strain ATCC 15444).